Here is a 100-residue protein sequence, read N- to C-terminus: Putative insulin-like peptide beta-type 6 (100 aa).

The signal sequence occupies residues 1 to 18; the sequence is MHSIVALMLIGTILPIAA. Disulfide bonds link Cys54/Cys83, Cys66/Cys96, Cys70/Cys97, and Cys82/Cys87.

The protein belongs to the insulin family.

It is found in the secreted. The sequence is that of Putative insulin-like peptide beta-type 6 (ins-5) from Caenorhabditis elegans.